The sequence spans 192 residues: Fe/S biogenesis protein NfuA (192 aa).

[4Fe-4S] cluster-binding residues include cysteine 149 and cysteine 152.

The protein belongs to the NfuA family. As to quaternary structure, homodimer. The cofactor is [4Fe-4S] cluster.

In terms of biological role, involved in iron-sulfur cluster biogenesis. Binds a 4Fe-4S cluster, can transfer this cluster to apoproteins, and thereby intervenes in the maturation of Fe/S proteins. Could also act as a scaffold/chaperone for damaged Fe/S proteins. The protein is Fe/S biogenesis protein NfuA of Tolumonas auensis (strain DSM 9187 / NBRC 110442 / TA 4).